Reading from the N-terminus, the 273-residue chain is Large ribosomal subunit protein uL2 (273 aa).

Positions 221–263 (RGTAMNPVDHPHGGGEGRNFGKHPVSPWGLKTKGKKTRRNKRT) are disordered. Residues 252 to 263 (TKGKKTRRNKRT) are compositionally biased toward basic residues.

The protein belongs to the universal ribosomal protein uL2 family. In terms of assembly, part of the 50S ribosomal subunit. Forms a bridge to the 30S subunit in the 70S ribosome.

In terms of biological role, one of the primary rRNA binding proteins. Required for association of the 30S and 50S subunits to form the 70S ribosome, for tRNA binding and peptide bond formation. It has been suggested to have peptidyltransferase activity; this is somewhat controversial. Makes several contacts with the 16S rRNA in the 70S ribosome. The chain is Large ribosomal subunit protein uL2 from Buchnera aphidicola subsp. Cinara cedri (strain Cc).